Here is a 333-residue protein sequence, read N- to C-terminus: MLTYKEAGVNIEEGYRSVKLIKEYAKKTMSEYVLNGLGSFAGMIELPEGYKKPVLVSGTDGVGTKLDIACKKRKFDTVGIDCVAMCVNDILCHGAKPLFFLDYIACGKLEAEVSSDLVKGVAEGCIKSQCSLIGGETAEMPGMYKEGDYDIAGFAVGIVDKDKIINGKDIKSGDKLIGIASSGVHSNGYSLIRKVFKNLDEDFNGKAIWEELLTPTKIYVKPVLSLLEKFNIKGMAHVTGGGFYENLPRMLSKEGLSIVINKNSYEIPEIFKKLMELGVKEEEMYNTFNMGIGFVLCVEEDEVEEVLKELSKQGEKAFEIGYINAGGEGVCIK.

This sequence belongs to the AIR synthase family.

The protein localises to the cytoplasm. The catalysed reaction is 2-formamido-N(1)-(5-O-phospho-beta-D-ribosyl)acetamidine + ATP = 5-amino-1-(5-phospho-beta-D-ribosyl)imidazole + ADP + phosphate + H(+). It functions in the pathway purine metabolism; IMP biosynthesis via de novo pathway; 5-amino-1-(5-phospho-D-ribosyl)imidazole from N(2)-formyl-N(1)-(5-phospho-D-ribosyl)glycinamide: step 2/2. The polypeptide is Phosphoribosylformylglycinamidine cyclo-ligase (Clostridium perfringens (strain 13 / Type A)).